We begin with the raw amino-acid sequence, 393 residues long: Protein DDI1 homolog 2 (393 aa).

The Ubiquitin-like domain occupies Met1–Glu81. The tract at residues Thr82–Asp127 is disordered. The segment covering Pro107–Asp118 has biased composition (pro residues). Asp246 is an active-site residue. The Ubiquitin-binding signature appears at Glu370–Asp389.

Belongs to the DDI1 family. As to quaternary structure, homodimer.

Its subcellular location is the cytoplasm. The protein resides in the cytosol. It localises to the chromosome. In terms of biological role, aspartic protease that mediates the cleavage of NFE2L1/NRF1 at 'Leu-104', thereby promoting release of NFE2L1/NRF1 from the endoplasmic reticulum membrane. Ubiquitination of NFE2L1/NRF1 is a prerequisite for cleavage, suggesting that DDI2 specifically recognizes and binds ubiquitinated NFE2L1/NRF1. Seems to act as a proteasomal shuttle which links the proteasome and replication fork proteins like RTF2. Required for cellular survival following replication stress. This is Protein DDI1 homolog 2 (ddi2) from Xenopus laevis (African clawed frog).